A 364-amino-acid chain; its full sequence is NF-kappa-B inhibitor epsilon (364 aa).

The disordered stretch occupies residues 1–108; sequence MSDARKGPDE…GSPLPPAGVL (108 aa). Ser18 is modified (phosphoserine). Positions 36-48 are enriched in low complexity; it reads PGSGSSQSGCPQP. Residues 51-70 show a composition bias toward basic and acidic residues; that stretch reads HAPETHKEPEKEDADGERAD. Over residues 93 to 104 the composition is skewed to pro residues; sequence PSPPAPGSPLPP. ANK repeat units follow at residues 122-155, 157-186, 190-219, 233-262, 267-296, and 300-329; these read DGDT…DIQN, LYQT…SRIL, HGDT…EPGR, QGLA…DIDV, SGKT…RVDA, and NGCT…DSLL.

This sequence belongs to the NF-kappa-B inhibitor family. Interacts with RELA, REL, NFKB1 nuclear factor NF-kappa-B p50 subunit and NFKB2 nuclear factor NF-kappa-B p52 subunit. Interacts with HNRNPA2B1; the interaction may be mediated by the RRM2 domain of HNRNPA2B1, and HNRNPA2B1 may interact simultaneously with FAM76B and either NFKBIA or NFKBIE to form a complex. Serine phosphorylated; followed by proteasome-dependent degradation.

The protein localises to the cytoplasm. Its function is as follows. Sequesters NF-kappa-B transcription factor complexes in the cytoplasm, thereby inhibiting their activity. Sequestered complexes include NFKB1/p50-RELA/p65 and NFKB1/p50-REL/c-Rel complexes. Limits B-cell activation in response to pathogens, and also plays an important role in B-cell development. The polypeptide is NF-kappa-B inhibitor epsilon (Nfkbie) (Mus musculus (Mouse)).